The chain runs to 688 residues: UvrABC system protein B (688 aa).

One can recognise a Helicase ATP-binding domain in the interval 31-414; it reads GRITAGETDV…LGIADGVVEQ (384 aa). 44–51 contributes to the ATP binding site; sequence GATGTGKS. A Beta-hairpin motif is present at residues 97–120; it reads YYDYYQPEAYVPQTDTFIEKDSSI. The Helicase C-terminal domain occupies 434 to 600; the sequence is QIDDLLEEIR…PLRKRIADIT (167 aa). A disordered region spans residues 614–633; it reads LAGRDQKRKSPTPSLRSGGI. In terms of domain architecture, UVR spans 642 to 677; sequence ESLIADLNAQMLAAAGELKFELAARLRDELSDLKRD.

This sequence belongs to the UvrB family. In terms of assembly, forms a heterotetramer with UvrA during the search for lesions. Interacts with UvrC in an incision complex.

Its subcellular location is the cytoplasm. Its function is as follows. The UvrABC repair system catalyzes the recognition and processing of DNA lesions. A damage recognition complex composed of 2 UvrA and 2 UvrB subunits scans DNA for abnormalities. Upon binding of the UvrA(2)B(2) complex to a putative damaged site, the DNA wraps around one UvrB monomer. DNA wrap is dependent on ATP binding by UvrB and probably causes local melting of the DNA helix, facilitating insertion of UvrB beta-hairpin between the DNA strands. Then UvrB probes one DNA strand for the presence of a lesion. If a lesion is found the UvrA subunits dissociate and the UvrB-DNA preincision complex is formed. This complex is subsequently bound by UvrC and the second UvrB is released. If no lesion is found, the DNA wraps around the other UvrB subunit that will check the other stand for damage. In Leifsonia xyli subsp. xyli (strain CTCB07), this protein is UvrABC system protein B.